The chain runs to 859 residues: Valine--tRNA ligase (859 aa).

The 'HIGH' region motif lies at P46–H56. The short motif at K583–S587 is the 'KMSKS' region element. K586 contacts ATP.

Belongs to the class-I aminoacyl-tRNA synthetase family. ValS type 2 subfamily. Monomer.

The protein resides in the cytoplasm. The catalysed reaction is tRNA(Val) + L-valine + ATP = L-valyl-tRNA(Val) + AMP + diphosphate. Catalyzes the attachment of valine to tRNA(Val). As ValRS can inadvertently accommodate and process structurally similar amino acids such as threonine, to avoid such errors, it has a 'posttransfer' editing activity that hydrolyzes mischarged Thr-tRNA(Val) in a tRNA-dependent manner. The sequence is that of Valine--tRNA ligase from Rickettsia felis (strain ATCC VR-1525 / URRWXCal2) (Rickettsia azadi).